Here is a 73-residue protein sequence, read N- to C-terminus: Translation initiation factor IF-1 (73 aa).

In terms of domain architecture, S1-like spans 1 to 73 (MSKKKDVIEM…TRGRITYRYK (73 aa)).

Belongs to the IF-1 family. In terms of assembly, component of the 30S ribosomal translation pre-initiation complex which assembles on the 30S ribosome in the order IF-2 and IF-3, IF-1 and N-formylmethionyl-tRNA(fMet); mRNA recruitment can occur at any time during PIC assembly.

It localises to the cytoplasm. Functionally, one of the essential components for the initiation of protein synthesis. Stabilizes the binding of IF-2 and IF-3 on the 30S subunit to which N-formylmethionyl-tRNA(fMet) subsequently binds. Helps modulate mRNA selection, yielding the 30S pre-initiation complex (PIC). Upon addition of the 50S ribosomal subunit IF-1, IF-2 and IF-3 are released leaving the mature 70S translation initiation complex. This chain is Translation initiation factor IF-1, found in Chloroflexus aurantiacus (strain ATCC 29366 / DSM 635 / J-10-fl).